A 37-amino-acid chain; its full sequence is Mau operon transcriptional activator (37 aa).

This sequence belongs to the LysR transcriptional regulatory family.

In terms of biological role, transcriptional activator of the mau genes involved in methylamine metabolism. The sequence is that of Mau operon transcriptional activator (mauR) from Paracoccus versutus (Thiobacillus versutus).